A 957-amino-acid polypeptide reads, in one-letter code: Dystrophin-related protein 2 (957 aa).

2 Spectrin repeats span residues Asp-102 to Glu-179 and Glu-231 to Asp-337. Residues Trp-358–Pro-383 enclose the WW domain. The segment at Lys-605–Thr-661 adopts a ZZ-type; degenerate zinc-finger fold. Zn(2+) is bound by residues Cys-610, Cys-613, Cys-634, and Cys-637. The residue at position 748 (Ser-748) is a Phosphoserine. Positions Pro-877 to Ser-894 are enriched in low complexity. A disordered region spans residues Pro-877–Ser-923. Thr-910 bears the Phosphothreonine mark.

Interacts with PRX; this enhances phosphorylation. Identified in a dystroglycan complex that contains at least PRX, DRP2, UTRN, DMD and DAG1. As to expression, detected in trigeminal nerve Schwann cells. Detected in brain cortex and hippocampus. Detected in brain membrane fractions and highly enriched in the postsynaptic density (at protein level).

The protein localises to the postsynaptic density. It is found in the cell projection. Its subcellular location is the dendrite. The protein resides in the perikaryon. It localises to the cell membrane. Functionally, required for normal myelination and for normal organization of the cytoplasm and the formation of Cajal bands in myelinating Schwann cells. Required for normal PRX location at appositions between the abaxonal surface of the myelin sheath and the Schwann cell plasma membrane. Possibly involved in membrane-cytoskeleton interactions of the central nervous system. In Rattus norvegicus (Rat), this protein is Dystrophin-related protein 2 (Drp2).